The primary structure comprises 997 residues: Autophagy-related protein 9 (997 aa).

Topologically, residues Met-1–Gly-318 are cytoplasmic. Residue Ser-19 is modified to Phosphoserine. Polar residues predominate over residues Val-29–Ser-39. The segment at Val-29–Glu-88 is disordered. Acidic residues predominate over residues Thr-79 to Glu-88. Glycyl lysine isopeptide (Lys-Gly) (interchain with G-Cter in ubiquitin) cross-links involve residues Lys-113 and Lys-121. Phosphoserine is present on Ser-122. Disordered stretches follow at residues Leu-127 to Asp-159 and His-214 to His-234. A Glycyl lysine isopeptide (Lys-Gly) (interchain with G-Cter in ubiquitin) cross-link involves residue Lys-138. A phosphoserine mark is found at Ser-143 and Ser-144. The segment covering Ser-144–Asp-159 has biased composition (acidic residues). A compositionally biased stretch (polar residues) spans Ala-221–Lys-233. Residues Phe-319–Val-339 form a helical membrane-spanning segment. Topologically, residues Ser-340–Lys-376 are lumenal. A helical membrane pass occupies residues Phe-377–Val-397. At Gln-398 to Ala-538 the chain is on the cytoplasmic side. An intramembrane segment occupies Gly-539–Phe-559. At Arg-560–Leu-620 the chain is on the cytoplasmic side. Residues Phe-621–Val-641 traverse the membrane as a helical segment. Topologically, residues Phe-642–Arg-656 are lumenal. At Ser-657 the chain carries Phosphoserine. Residues Ser-657 to Thr-677 form a helical membrane-spanning segment. Topologically, residues Gln-678–Arg-723 are cytoplasmic. A Glycyl lysine isopeptide (Lys-Gly) (interchain with G-Cter in ubiquitin) cross-link involves residue Lys-701. An intramembrane segment occupies Ile-724–Ser-744. The Cytoplasmic segment spans residues Leu-745–Arg-997. Ser-787 and Ser-792 each carry phosphoserine. Thr-794 carries the phosphothreonine modification. A Phosphoserine modification is found at Ser-802. Thr-804 bears the Phosphothreonine mark. Ser-831, Ser-842, Ser-864, Ser-948, and Ser-969 each carry phosphoserine.

The protein belongs to the ATG9 family. Homotrimer; forms a homotrimer with a central pore that forms a path between the two membrane leaflets. Interacts with ATG23 and ATG27 to form a cycling complex for trafficking to the PAS. Interacts (via N-terminus) with ATG11, required for recruitment of ATG9 to the PAS for the Cvt pathway during nutrient-rich conditions. Interacts (via N-terminus) with ATG17; required for recruitment to the PAS during autophagy and starved conditions. Interacts with ATG2 and ATG18; required for the retrieval of ATG9 from the PAS to the cytoplasmic pool. Interacts with ATG41. Interacts with the conserved oligomeric Golgi (COG) complex subunits COG3 and COG4. Interacts with TRS85. In terms of processing, phosphorylated by ATG1; phosphorylation is required for autophagy and cytoplasm to vacuole transport (Cvt) vesicle formation. Phosphorylation by ATG1 regulates ATG18 interaction and preautophagosome elongation. Phosphorylation at Ser-122 is required for selective autophagy by regulating anterograde trafficking and interaction with ATG23 and ATG27. Phosphorylation at Ser-122 prevents ubiquitination by the SCF(MET30) complex. Ubiquitinated by the SCF(MET30) complex in normal conditions, leading to its degradation by the proteasome, thereby preventing inappropriate induction of autophagy. Ubiquitination by the SCF(MET30) complex is prevented by phosphorylation at Ser-122.

Its subcellular location is the preautophagosomal structure membrane. The protein localises to the cytoplasmic vesicle membrane. It is found in the golgi apparatus membrane. It localises to the endoplasmic reticulum membrane. The protein resides in the mitochondrion membrane. It carries out the reaction a 1,2-diacyl-sn-glycero-3-phosphocholine(in) = a 1,2-diacyl-sn-glycero-3-phosphocholine(out). The enzyme catalyses a 1,2-diacyl-sn-glycero-3-phospho-L-serine(in) = a 1,2-diacyl-sn-glycero-3-phospho-L-serine(out). The catalysed reaction is a 1,2-diacyl-sn-glycero-3-phosphoethanolamine(in) = a 1,2-diacyl-sn-glycero-3-phosphoethanolamine(out). It catalyses the reaction a 1,2-diacyl-sn-glycero-3-phospho-(1D-myo-inositol-3-phosphate)(in) = a 1,2-diacyl-sn-glycero-3-phospho-(1D-myo-inositol-3-phosphate)(out). Its function is as follows. Phospholipid scramblase involved in autophagy and cytoplasm to vacuole transport (Cvt) vesicle formation. Cycles between the preautophagosomal structure/phagophore assembly site (PAS) and the cytoplasmic vesicle pool and supplies membrane for the growing autophagosome. Lipid scramblase activity plays a key role in preautophagosomal structure/phagophore assembly by distributing the phospholipids that arrive through ATG2 from the cytoplasmic to the luminal leaflet of the bilayer, thereby driving autophagosomal membrane expansion. Required for mitophagy. Also involved in endoplasmic reticulum-specific autophagic process and is essential for the survival of cells subjected to severe ER stress. Different machineries are required for anterograde trafficking to the PAS during either the Cvt pathway or bulk autophagy and for retrograde trafficking. Recruits vesicle-tethering proteins TRS85 and YPT1 to the autophagosome formation site. Also recruits ATG23 and ATG8 to the PAS. The protein is Autophagy-related protein 9 of Saccharomyces cerevisiae (strain YJM789) (Baker's yeast).